The primary structure comprises 714 residues: WD repeat and coiled-coil-containing protein (714 aa).

WD repeat units lie at residues 55 to 98 and 154 to 194; these read GQFE…LEQN and KGSG…LVPC. Disordered stretches follow at residues 432–454 and 531–564; these read EEST…SENF and QASR…KEKN. Residues 567 to 595 are a coiled coil; that stretch reads QLTQNMERIFTRFAEVQQCLSEIREFTQN. Positions 685–714 are disordered; the sequence is RSARRKSPARPPSGADDFPPESPKSPSMEK.

This chain is WD repeat and coiled-coil-containing protein (wdcp), found in Danio rerio (Zebrafish).